We begin with the raw amino-acid sequence, 267 residues long: 2-keto-3-deoxy-L-rhamnonate aldolase (267 aa).

The Proton acceptor role is filled by His49. Gln151 is a binding site for substrate. Mg(2+) is bound at residue Glu153. Substrate is bound by residues Ala178 and Asp179. A Mg(2+)-binding site is contributed by Asp179.

Belongs to the HpcH/HpaI aldolase family. KDR aldolase subfamily. As to quaternary structure, homohexamer. The cofactor is Mg(2+).

The enzyme catalyses 2-dehydro-3-deoxy-L-rhamnonate = (S)-lactaldehyde + pyruvate. Its function is as follows. Catalyzes the reversible retro-aldol cleavage of 2-keto-3-deoxy-L-rhamnonate (KDR) to pyruvate and lactaldehyde. The sequence is that of 2-keto-3-deoxy-L-rhamnonate aldolase from Escherichia coli O157:H7.